The chain runs to 449 residues: Glucose-6-phosphate isomerase (449 aa).

The Proton donor role is filled by glutamate 291. Catalysis depends on residues histidine 312 and lysine 426.

Belongs to the GPI family.

It is found in the cytoplasm. The catalysed reaction is alpha-D-glucose 6-phosphate = beta-D-fructose 6-phosphate. Its pathway is carbohydrate biosynthesis; gluconeogenesis. It functions in the pathway carbohydrate degradation; glycolysis; D-glyceraldehyde 3-phosphate and glycerone phosphate from D-glucose: step 2/4. Its function is as follows. Catalyzes the reversible isomerization of glucose-6-phosphate to fructose-6-phosphate. This is Glucose-6-phosphate isomerase from Streptococcus pyogenes serotype M49 (strain NZ131).